The following is a 518-amino-acid chain: Dihydro-ML-236C monooxygenase mlcC (518 aa).

Residues 1–31 are Cytoplasmic-facing; it reads MLGQVLLTVESYQWVSTPQALVAVAVLLSLI. Residues 32–48 form a helical; Signal-anchor for type II membrane protein membrane-spanning segment; the sequence is AYRLRGRQSELQVYNPK. The Lumenal portion of the chain corresponds to 49–518; it reads KWWELTTMRA…EDIPLPHDRC (470 aa). Cys454 contacts heme.

The protein belongs to the cytochrome P450 family. It depends on heme as a cofactor.

Its subcellular location is the endoplasmic reticulum membrane. The enzyme catalyses dihydro-ML-236C carboxylate + reduced [NADPH--hemoprotein reductase] + O2 = ML-236C carboxylate + oxidized [NADPH--hemoprotein reductase] + 2 H2O + H(+). It catalyses the reaction ML-236C carboxylate + reduced [NADPH--hemoprotein reductase] + O2 = ML-236A carboxylate + oxidized [NADPH--hemoprotein reductase] + H2O + H(+). It participates in polyketide biosynthesis. Functionally, dihydro-ML-236C carboxylate monooxygenase; part of the gene cluster that mediates the biosynthesis of compactin, also known as mevastatin or ML-236B, and which acts as a potent competitive inhibitor of HMG-CoA reductase. Compactin biosynthesis is performed in two stages. The first stage is catalyzed by the nonaketide synthase mlcA, which belongs to type I polyketide synthases and catalyzes the iterative nine-step formation of the polyketide. This PKS stage is completed by the action of dehydrogenase mlcG, which catalyzes the NADPH-dependent reduction of the unsaturated tetra-, penta- and heptaketide intermediates that arise during the mlcA-mediated biosynthesis of the nonaketide chain and leads to dihydro-ML-236C carboxylate. Covalently bound dihydro-ML-236C carboxylate is released from mlcA by the mlcF esterase. Conversion of dihydro-ML-236C carboxylate into ML-236A carboxylate is subsequently performed with the participation of molecular oxygen and P450 monoogygenase mlcC. Finally, mlcH performs the conversion of ML-236A carboxylate to ML-236B/compactin carboxylate through the addition of the side-chain diketide moiety produced by the diketide synthase mlcB. This is Dihydro-ML-236C monooxygenase mlcC from Penicillium citrinum.